Consider the following 399-residue polypeptide: tRNA-specific 2-thiouridylase MnmA (399 aa).

Residues 7 to 14 (AMSGGVDS) and methionine 33 each bind ATP. The active-site Nucleophile is the cysteine 128. The cysteines at positions 128 and 224 are disulfide-linked. An ATP-binding site is contributed by glycine 152. The interaction with tRNA stretch occupies residues 174–176 (KDQ). The Cysteine persulfide intermediate role is filled by cysteine 224. Residues 333–334 (RY) are interaction with tRNA.

It belongs to the MnmA/TRMU family.

The protein localises to the cytoplasm. It catalyses the reaction S-sulfanyl-L-cysteinyl-[protein] + uridine(34) in tRNA + AH2 + ATP = 2-thiouridine(34) in tRNA + L-cysteinyl-[protein] + A + AMP + diphosphate + H(+). Functionally, catalyzes the 2-thiolation of uridine at the wobble position (U34) of tRNA, leading to the formation of s(2)U34. The chain is tRNA-specific 2-thiouridylase MnmA from Rhodopirellula baltica (strain DSM 10527 / NCIMB 13988 / SH1).